The chain runs to 398 residues: Cap-specific mRNA (nucleoside-2'-O-)-methyltransferase 1 (398 aa).

One can recognise a RrmJ-type SAM-dependent 2'-O-MTase domain in the interval 85–298 (QFSNRAGHKL…ERYLVCVDFL (214 aa)). 2 residues coordinate S-adenosyl-L-methionine: glycine 132 and aspartate 211. The active-site Proton acceptor is the lysine 252. The interval 371–398 (LKAKETTTRTSAESDDSPLSSRESCKDG) is disordered.

The enzyme catalyses a 5'-end (N(7)-methyl 5'-triphosphoguanosine)-ribonucleoside in mRNA + S-adenosyl-L-methionine = a 5'-end (N(7)-methyl 5'-triphosphoguanosine)-(2'-O-methyl-ribonucleoside) in mRNA + S-adenosyl-L-homocysteine + H(+). S-adenosyl-L-methionine-dependent methyltransferase that mediates RNA cap1 2'-O-ribose methylation to the 5'-cap structure of RNAs. Methylates the ribose of the first nucleotide of a m(7)GpppG-capped mRNA to produce m(7)GpppNmp (cap1). This chain is Cap-specific mRNA (nucleoside-2'-O-)-methyltransferase 1, found in Leishmania braziliensis.